We begin with the raw amino-acid sequence, 192 residues long: Orotate phosphoribosyltransferase (192 aa).

Residue 116–124 (EDVVTTGKS) coordinates 5-phospho-alpha-D-ribose 1-diphosphate. Orotate contacts are provided by Thr120 and Arg148.

This sequence belongs to the purine/pyrimidine phosphoribosyltransferase family. PyrE subfamily. Homodimer. The cofactor is Mg(2+).

The enzyme catalyses orotidine 5'-phosphate + diphosphate = orotate + 5-phospho-alpha-D-ribose 1-diphosphate. It participates in pyrimidine metabolism; UMP biosynthesis via de novo pathway; UMP from orotate: step 1/2. Catalyzes the transfer of a ribosyl phosphate group from 5-phosphoribose 1-diphosphate to orotate, leading to the formation of orotidine monophosphate (OMP). The sequence is that of Orotate phosphoribosyltransferase from Clostridium perfringens (strain ATCC 13124 / DSM 756 / JCM 1290 / NCIMB 6125 / NCTC 8237 / Type A).